The primary structure comprises 128 residues: Large ribosomal subunit protein mL52 (128 aa).

The transit peptide at 1-28 (MLQIAKLCLATSGRITAQRYVAVTTARA) directs the protein to the mitochondrion.

The protein belongs to the mitochondrion-specific ribosomal protein mL52 family. In terms of assembly, component of the mitochondrial ribosome large subunit (39S) which comprises a 16S rRNA and about 50 distinct proteins.

Its subcellular location is the mitochondrion. This is Large ribosomal subunit protein mL52 (mRpL52) from Drosophila pseudoobscura pseudoobscura (Fruit fly).